The sequence spans 130 residues: Large ribosomal subunit protein bL12 (130 aa).

This sequence belongs to the bacterial ribosomal protein bL12 family. Homodimer. Part of the ribosomal stalk of the 50S ribosomal subunit. Forms a multimeric L10(L12)X complex, where L10 forms an elongated spine to which 2 to 4 L12 dimers bind in a sequential fashion. Binds GTP-bound translation factors.

Its function is as follows. Forms part of the ribosomal stalk which helps the ribosome interact with GTP-bound translation factors. Is thus essential for accurate translation. This chain is Large ribosomal subunit protein bL12, found in Prochlorococcus marinus (strain SARG / CCMP1375 / SS120).